A 161-amino-acid polypeptide reads, in one-letter code: MKIRIGHGFDVHKFGAARPLILCGVEVPYETGLIAHSDGDVVLHAISDAILGALALGDIGKHFPDTDTAYKGADSRVLLRHCYALARAKGFVLGNLDVTIIAQAPKMAPHIEAMRQILAADLTSELDDINVKATTTEQLGFTGRKEGIAVEAVVLMTRKHD.

A divalent metal cation contacts are provided by Asp-10 and His-12. 4-CDP-2-C-methyl-D-erythritol 2-phosphate is bound by residues 10–12 (DVH) and 36–37 (HS). His-44 is a binding site for a divalent metal cation. 4-CDP-2-C-methyl-D-erythritol 2-phosphate is bound by residues 58 to 60 (DIG), 63 to 67 (FPDTD), 102 to 108 (AQAPKMA), 134 to 137 (TTTE), Phe-141, and Arg-144.

This sequence belongs to the IspF family. In terms of assembly, homotrimer. A divalent metal cation is required as a cofactor.

It carries out the reaction 4-CDP-2-C-methyl-D-erythritol 2-phosphate = 2-C-methyl-D-erythritol 2,4-cyclic diphosphate + CMP. It participates in isoprenoid biosynthesis; isopentenyl diphosphate biosynthesis via DXP pathway; isopentenyl diphosphate from 1-deoxy-D-xylulose 5-phosphate: step 4/6. Involved in the biosynthesis of isopentenyl diphosphate (IPP) and dimethylallyl diphosphate (DMAPP), two major building blocks of isoprenoid compounds. Catalyzes the conversion of 4-diphosphocytidyl-2-C-methyl-D-erythritol 2-phosphate (CDP-ME2P) to 2-C-methyl-D-erythritol 2,4-cyclodiphosphate (ME-CPP) with a corresponding release of cytidine 5-monophosphate (CMP). The polypeptide is 2-C-methyl-D-erythritol 2,4-cyclodiphosphate synthase (Shewanella baltica (strain OS155 / ATCC BAA-1091)).